Here is a 323-residue protein sequence, read N- to C-terminus: rRNA 2'-O-methyltransferase fibrillarin (323 aa).

Residues 1 to 78 (MRPGFSPRGG…GGGRGGFGGG (78 aa)) form a disordered region. Composition is skewed to gly residues over residues 7–44 (PRGG…GGRG) and 63–78 (GRGG…FGGG). R8, R17, R23, and R29 each carry asymmetric dimethylarginine. Residues 174–175 (TT), 193–194 (EF), 218–219 (DA), and 238–241 (DVAQ) contribute to the S-adenosyl-L-methionine site. The interval 276–308 (APEAVFAAEVKKMQQENMKPQEQLTLEPYERDH) is helical.

It belongs to the methyltransferase superfamily. Fibrillarin family. As to quaternary structure, component of box C/D small nucleolar ribonucleoprotein (snoRNP) particles. Part of the small subunit (SSU) processome, composed of more than 70 proteins and the RNA chaperone small nucleolar RNA (snoRNA) U3. By homology to other fibrillarins, some or all of the N-terminal domain arginines are modified to asymmetric dimethylarginine (DMA).

It localises to the nucleus. It is found in the nucleolus. Its subcellular location is the nucleoplasm. The catalysed reaction is L-glutaminyl-[histone H2A] + S-adenosyl-L-methionine = N(5)-methyl-L-glutaminyl-[histone H2A] + S-adenosyl-L-homocysteine + H(+). The enzyme catalyses a ribonucleotide in rRNA + S-adenosyl-L-methionine = a 2'-O-methylribonucleotide in rRNA + S-adenosyl-L-homocysteine + H(+). It catalyses the reaction a ribonucleotide in U6 snRNA + S-adenosyl-L-methionine = a 2'-O-methylribonucleotide in U6 snRNA + S-adenosyl-L-homocysteine + H(+). Its function is as follows. S-adenosyl-L-methionine-dependent methyltransferase that has the ability to methylate both RNAs and proteins. Involved in pre-rRNA processing by catalyzing the site-specific 2'-hydroxyl methylation of ribose moieties in pre-ribosomal RNA. Probably catalyzes 2'-O-methylation of U6 snRNAs in box C/D RNP complexes. U6 snRNA 2'-O-methylation is required for mRNA splicing fidelity. Also acts as a protein methyltransferase by mediating methylation of 'Gln-105' of histone H2A (H2AQ104me), a modification that impairs binding of the FACT complex and is specifically present at 35S ribosomal DNA locus. Part of the small subunit (SSU) processome, first precursor of the small eukaryotic ribosomal subunit. During the assembly of the SSU processome in the nucleolus, many ribosome biogenesis factors, an RNA chaperone and ribosomal proteins associate with the nascent pre-rRNA and work in concert to generate RNA folding, modifications, rearrangements and cleavage as well as targeted degradation of pre-ribosomal RNA by the RNA exosome. The sequence is that of rRNA 2'-O-methyltransferase fibrillarin (fbl) from Xenopus laevis (African clawed frog).